We begin with the raw amino-acid sequence, 75 residues long: Large ribosomal subunit protein bL31 (75 aa).

The protein belongs to the bacterial ribosomal protein bL31 family. Type A subfamily. In terms of assembly, part of the 50S ribosomal subunit.

Binds the 23S rRNA. The polypeptide is Large ribosomal subunit protein bL31 (Rhodopseudomonas palustris (strain BisB5)).